We begin with the raw amino-acid sequence, 385 residues long: Deoxyguanosinetriphosphate triphosphohydrolase-like protein (385 aa).

Residues 75-197 form the HD domain; the sequence is RLTHTLEVGQ…VDAADALAYT (123 aa).

It belongs to the dGTPase family. Type 2 subfamily.

In Deinococcus geothermalis (strain DSM 11300 / CIP 105573 / AG-3a), this protein is Deoxyguanosinetriphosphate triphosphohydrolase-like protein.